The sequence spans 143 residues: uncharacterized protein (143 aa).

Its subcellular location is the cytoplasm. It localises to the nucleus. This is an uncharacterized protein from Schizosaccharomyces pombe (strain 972 / ATCC 24843) (Fission yeast).